The primary structure comprises 180 residues: RNA polymerase sigma-E factor (180 aa).

Residues 36-49 (DLLQTALARTYGRW) carry the Polymerase core binding motif. Residues 130-149 (TEETAAALGMSAGTVKSTLH) constitute a DNA-binding region (H-T-H motif).

The protein belongs to the sigma-70 factor family. ECF subfamily.

It is found in the cytoplasm. Sigma factors are initiation factors that promote the attachment of RNA polymerase to specific initiation sites and are then released. This sigma factor is required for the synthesis of the antibiotic actinomycin. The chain is RNA polymerase sigma-E factor (sigE) from Streptomyces antibioticus.